The primary structure comprises 235 residues: Transmembrane protein 215 (235 aa).

The next 2 helical transmembrane spans lie at 12 to 32 (LVVA…VSGM) and 40 to 60 (IPLL…IALA). A disordered region spans residues 99 to 145 (SDLESGKGSSDELAKKAGLRGKPPPQSQGEVSVASSINSPTPTEEGE). Polar residues predominate over residues 125–140 (SQGEVSVASSINSPTP).

It localises to the membrane. The protein is Transmembrane protein 215 (TMEM215) of Homo sapiens (Human).